Reading from the N-terminus, the 117-residue chain is Large ribosomal subunit protein bL20 (117 aa).

The protein belongs to the bacterial ribosomal protein bL20 family.

In terms of biological role, binds directly to 23S ribosomal RNA and is necessary for the in vitro assembly process of the 50S ribosomal subunit. It is not involved in the protein synthesizing functions of that subunit. The sequence is that of Large ribosomal subunit protein bL20 from Rickettsia typhi (strain ATCC VR-144 / Wilmington).